We begin with the raw amino-acid sequence, 144 residues long: FK506-binding protein 2 (144 aa).

An N-terminal signal peptide occupies residues Met1–Ala20. The PPIase FKBP-type domain maps to Gly48–Asp136. Positions Arg141 to Leu144 match the Prevents secretion from ER motif.

This sequence belongs to the FKBP-type PPIase family. FKBP2 subfamily.

The protein resides in the endoplasmic reticulum. It catalyses the reaction [protein]-peptidylproline (omega=180) = [protein]-peptidylproline (omega=0). Inhibited by both FK506 and rapamycin. PPIases accelerate the folding of proteins. It catalyzes the cis-trans isomerization of proline imidic peptide bonds in oligopeptides. This chain is FK506-binding protein 2 (FPR2), found in Yarrowia lipolytica (strain CLIB 122 / E 150) (Yeast).